A 659-amino-acid polypeptide reads, in one-letter code: Threonine--tRNA ligase (659 aa).

The 60-residue stretch at 1 to 60 folds into the TGS domain; it reads MTVYLPDGKPLELPEGATAKDVARALGEGWERRAVGAIVDGELYDLLKPLPQGAKVRLLT. A catalytic region spans residues 252 to 552; the sequence is DHRRLGRELE…LIEHFAGDFP (301 aa). Zn(2+) is bound by residues cysteine 349, histidine 400, and histidine 529.

It belongs to the class-II aminoacyl-tRNA synthetase family. In terms of assembly, homodimer. Zn(2+) serves as cofactor.

It is found in the cytoplasm. It carries out the reaction tRNA(Thr) + L-threonine + ATP = L-threonyl-tRNA(Thr) + AMP + diphosphate + H(+). In terms of biological role, catalyzes the attachment of threonine to tRNA(Thr) in a two-step reaction: L-threonine is first activated by ATP to form Thr-AMP and then transferred to the acceptor end of tRNA(Thr). Also edits incorrectly charged L-seryl-tRNA(Thr). The sequence is that of Threonine--tRNA ligase from Thermus thermophilus (strain ATCC BAA-163 / DSM 7039 / HB27).